We begin with the raw amino-acid sequence, 1125 residues long: Telomerase reverse transcriptase (1125 aa).

Positions 1–234 are RNA-interacting domain 1; sequence MPRAPRCRAV…ARRRRSSARG (234 aa). The GQ motif stretch occupies residues 58-199; that stretch reads VPWDAQPPPA…RQVGGTRAGF (142 aa). The tract at residues 137–141 is required for regulating specificity for telomeric DNA and for processivity for primer elongation; the sequence is WGLLL. Residues 186–308 form a disordered region; the sequence is RRPTRQVGGT…WRLSPSEGEP (123 aa). Residues 224 to 243 show a composition bias toward basic residues; it reads GARRRRSSARGRLPPAKRPR. The Bipartite nuclear localization signal signature appears at 226–244; sequence RRRRSSARGRLPPAKRPRR. The residue at position 231 (Ser231) is a Phosphoserine; by PKB/AKT1. Residues 235-312 are linker; the sequence is RLPPAKRPRR…PSEGEPGAGA (78 aa). 2 stretches are compositionally biased toward basic and acidic residues: residues 244 to 253 and 269 to 279; these read RGLEPGRDLE and DAAEAKSRKGD. Residues 290–531 are required for oligomerization; sequence GERGVGSASW…VPAAEHRQRE (242 aa). The RNA-interacting domain 2 stretch occupies residues 313–543; the sequence is CAETKRFLYC…LGRFLHWLMG (231 aa). The TFLY; involved in RNA binding motif lies at 316-321; that stretch reads TKRFLY. Residues 364 to 514 are QFP motif; it reads PRRPRRLPAR…MKVQDCAWLR (151 aa). A CP motif region spans residues 385–405; that stretch reads LGNHARSPYGALLRAHCPLPA. Ser450 bears the Phosphoserine; by DYRK2 mark. A Reverse transcriptase domain is found at 598–928; sequence EVRQHQEARP…CLFPWCGLLL (331 aa). Tyr700 is subject to Phosphotyrosine; by SRC-type Tyr-kinases. Residues Asp705, Asp861, and Asp862 each contribute to the Mg(2+) site. Residues 907–921 are required for oligomerization; that stretch reads LGGAAPLQLPAHCLF. The segment at 923–927 is primer grip sequence; sequence WCGLL. Residues 929–1125 are CTE; sequence DTRTLEVHGD…LTADFKTILD (197 aa).

Belongs to the reverse transcriptase family. Telomerase subfamily. In terms of assembly, catalytic component of the telomerase holoenzyme complex composed of one molecule of TERT, one molecule of WRAP53/TCAB1, two molecules of H/ACA ribonucleoprotein complex subunits DKC1, NOP10, NHP2 and GAR1, and a telomerase RNA template component (TERC). The telomerase holoenzyme complex is associated with TEP1, SMG6/EST1A and POT1. The molecular chaperone HSP90/P23 complex is required for correct assembly and stabilization of the active telomerase. Interacts directly with HSP90A and PTGES3. Interacts with HSPA1A; the interaction occurs in the absence of TERC and dissociates once the complex has formed. Interacts with RAN; the interaction promotes nuclear export of TERT. Interacts with XPO1. Interacts with PTPN11; the interaction retains TERT in the nucleus. Interacts with NCL (via RRM1 and C-terminal RRM4/Arg/Gly-rich domains); the interaction is important for nucleolar localization of TERT. Interacts with SMARCA4 (via the bromodomain); the interaction regulates Wnt-mediated signaling. Interacts with MCRS1 (isoform MCRS2); the interaction inhibits in vitro telomerase activity. Interacts with PIF1; the interaction has no effect on the elongation activity of TERT. Interacts with PML; the interaction recruits TERT to PML bodies and inhibits telomerase activity. Interacts with GNL3L. Interacts with isoform 1 and isoform 2 of NVL. Interacts with DHX36. Interacts with ATF7. In terms of processing, phosphorylation at Tyr-700 under oxidative stress leads to translocation of TERT to the cytoplasm and reduces its antiapoptotic activity. Dephosphorylated by SHP2/PTPN11 leading to nuclear retention. Phosphorylation at Ser-231 by the AKT pathway promotes nuclear location. Phosphorylation at the G2/M phase at Ser-450 by DYRK2 promotes ubiquitination by the EDVP complex and degradation. Ubiquitinated by the EDVP complex, a E3 ligase complex following phosphorylation at Ser-450 by DYRK2. Ubiquitinated leads to proteasomal degradation.

It localises to the nucleus. The protein resides in the nucleolus. Its subcellular location is the nucleoplasm. It is found in the chromosome. The protein localises to the telomere. It localises to the cytoplasm. The protein resides in the PML body. It catalyses the reaction DNA(n) + a 2'-deoxyribonucleoside 5'-triphosphate = DNA(n+1) + diphosphate. In terms of biological role, telomerase is a ribonucleoprotein enzyme essential for the replication of chromosome termini in most eukaryotes. Active in progenitor and cancer cells. Inactive, or very low activity, in normal somatic cells. Catalytic component of the teleromerase holoenzyme complex whose main activity is the elongation of telomeres by acting as a reverse transcriptase that adds simple sequence repeats to chromosome ends by copying a template sequence within the RNA component of the enzyme. Catalyzes the RNA-dependent extension of 3'-chromosomal termini with the 6-nucleotide telomeric repeat unit, 5'-TTAGGG-3'. The catalytic cycle involves primer binding, primer extension and release of product once the template boundary has been reached or nascent product translocation followed by further extension. More active on substrates containing 2 or 3 telomeric repeats. Telomerase activity is regulated by a number of factors including telomerase complex-associated proteins, chaperones and polypeptide modifiers. Modulates Wnt signaling. Plays important roles in aging and antiapoptosis. This is Telomerase reverse transcriptase (TERT) from Bos taurus (Bovine).